The sequence spans 346 residues: Putative D-threonate 4-phosphate dehydrogenase (346 aa).

His-141 and Thr-142 together coordinate substrate. Residues His-171, His-215, and His-270 each coordinate a divalent metal cation. Substrate contacts are provided by Lys-278 and Arg-296.

The protein belongs to the PdxA family. PdxA2 subfamily. In terms of assembly, homodimer. It depends on a divalent metal cation as a cofactor.

The catalysed reaction is 4-O-phospho-D-threonate + NAD(+) = dihydroxyacetone phosphate + CO2 + NADH. Its function is as follows. Catalyzes the NAD-dependent oxidation and subsequent decarboxylation of D-threonate 4-phosphate to produce dihydroxyacetone phosphate (DHAP). This is Putative D-threonate 4-phosphate dehydrogenase from Cutibacterium acnes (strain DSM 16379 / KPA171202) (Propionibacterium acnes).